A 159-amino-acid polypeptide reads, in one-letter code: Phosphopantetheine adenylyltransferase (159 aa).

Thr10 contacts substrate. ATP contacts are provided by residues Thr10–Phe11 and His18. Substrate is bound by residues Lys42, Met74, and Arg88. ATP is bound by residues Gly89 to Arg91, Glu99, and Trp124 to Ser130.

It belongs to the bacterial CoaD family. Homohexamer. The cofactor is Mg(2+).

It localises to the cytoplasm. It carries out the reaction (R)-4'-phosphopantetheine + ATP + H(+) = 3'-dephospho-CoA + diphosphate. The protein operates within cofactor biosynthesis; coenzyme A biosynthesis; CoA from (R)-pantothenate: step 4/5. Functionally, reversibly transfers an adenylyl group from ATP to 4'-phosphopantetheine, yielding dephospho-CoA (dPCoA) and pyrophosphate. The chain is Phosphopantetheine adenylyltransferase from Yersinia pseudotuberculosis serotype O:3 (strain YPIII).